A 316-amino-acid polypeptide reads, in one-letter code: Pantothenate kinase (316 aa).

95-102 is a binding site for ATP; it reads GSVAVGKS.

It belongs to the prokaryotic pantothenate kinase family.

The protein resides in the cytoplasm. The enzyme catalyses (R)-pantothenate + ATP = (R)-4'-phosphopantothenate + ADP + H(+). The protein operates within cofactor biosynthesis; coenzyme A biosynthesis; CoA from (R)-pantothenate: step 1/5. The polypeptide is Pantothenate kinase (Shewanella sp. (strain ANA-3)).